Reading from the N-terminus, the 304-residue chain is Solute carrier family 25 member 34 (304 aa).

Solcar repeat units follow at residues 4–97, 101–194, and 204–295; these read VPPA…ACQA, QQPG…AKAW, and DSWL…LRKL. 6 helical membrane-spanning segments follow: residues 7 to 27, 45 to 65, 98 to 120, 170 to 191, 206 to 226, and 278 to 301; these read AVDL…TNPL, TYPR…RADG, GLSQ…GAFV, VGGA…FASA, WLVA…VMTP, and LGPH…WGQH.

Belongs to the mitochondrial carrier (TC 2.A.29) family.

Its subcellular location is the mitochondrion inner membrane. The catalysed reaction is a dicarboxylate(in) + sulfate(out) = a dicarboxylate(out) + sulfate(in). Its function is as follows. Putative antiporter that exchanges dicarboxylates and sulfur oxoanions across the inner membrane of mitochondria. The protein is Solute carrier family 25 member 34 (SLC25A34) of Bos taurus (Bovine).